We begin with the raw amino-acid sequence, 185 residues long: MFRSQFTTLLGLFSGAWLPTGSGRPGAPATPVQSGTAINQSWTLDPLVPISALGSWEAFLGLQNKQQGTGELQGGGQRVAAGVPLPLAPQEVLQETCKALSFVQVISRPGCTSARVLNHLCFGRCSSFYIPSSDPTPVVFCNSCVPARKRWTSVTLWCGAGQLASPRRVRISTVLVQKCQCRPKL.

An N-terminal signal peptide occupies residues 1–23 (MFRSQFTTLLGLFSGAWLPTGSG). Asn-39 carries an N-linked (GlcNAc...) asparagine glycan. Disulfide bonds link Cys-97/Cys-144, Cys-111/Cys-158, Cys-121/Cys-179, and Cys-125/Cys-181. The CTCK domain occupies 97–182 (CKALSFVQVI…TVLVQKCQCR (86 aa)).

The protein belongs to the DAN family. As to expression, expressed throughout the neural retina and in the photoreceptor nuclear layer. In the retina, widely expressed in inner nuclear layer, as well as in the ganglion cell layer.

The protein localises to the secreted. Its function is as follows. Antagonist of the extracellular signaling protein NODAL, which is required for correct left-right patterning during embryonic development. Antagonist of BMP4 signaling. Antagonist of TGF-beta signaling. Independently of its role in left-right axis establishment, plays a role during heart development, possibly through the regulation of TGF-beta/Nodal signaling pathway. Displays anti-angiogenic activity by inhibiting endothelial sprouting, migration, and proliferation. Once internalized by endothelial cells, may alter their redox and glycolytic balance. The sequence is that of DAN domain family member 5 (Dand5) from Mus musculus (Mouse).